We begin with the raw amino-acid sequence, 226 residues long: Ribonuclease 3 (226 aa).

One can recognise an RNase III domain in the interval 7-129 (LPRLCRTLGY…IIGAVYLDSD (123 aa)). Glutamate 42 is a Mg(2+) binding site. The active site involves aspartate 46. Residues aspartate 115 and glutamate 118 each coordinate Mg(2+). Residue glutamate 118 is part of the active site. Residues 156–226 (DAKTLLQEHL…AAQVLELLKK (71 aa)) form the DRBM domain.

The protein belongs to the ribonuclease III family. Homodimer. The cofactor is Mg(2+).

The protein resides in the cytoplasm. It carries out the reaction Endonucleolytic cleavage to 5'-phosphomonoester.. Functionally, digests double-stranded RNA. Involved in the processing of primary rRNA transcript to yield the immediate precursors to the large and small rRNAs (23S and 16S). Processes some mRNAs, and tRNAs when they are encoded in the rRNA operon. Processes pre-crRNA and tracrRNA of type II CRISPR loci if present in the organism. The protein is Ribonuclease 3 of Shewanella baltica (strain OS185).